Reading from the N-terminus, the 111-residue chain is uncharacterized protein (111 aa).

This is an uncharacterized protein from Ureaplasma parvum serovar 3 (strain ATCC 700970).